A 117-amino-acid chain; its full sequence is Large ribosomal subunit protein bL20 (117 aa).

It belongs to the bacterial ribosomal protein bL20 family.

Its function is as follows. Binds directly to 23S ribosomal RNA and is necessary for the in vitro assembly process of the 50S ribosomal subunit. It is not involved in the protein synthesizing functions of that subunit. The polypeptide is Large ribosomal subunit protein bL20 (Leptospira borgpetersenii serovar Hardjo-bovis (strain JB197)).